Consider the following 493-residue polypeptide: Probable cytochrome P450 508A2 (493 aa).

Residues 1–21 (MIFGIIVYLFLIYILHNAYSK) form a helical membrane-spanning segment. Cysteine 439 provides a ligand contact to heme.

Belongs to the cytochrome P450 family. Requires heme as cofactor.

It is found in the membrane. The protein is Probable cytochrome P450 508A2 (cyp508A2-1) of Dictyostelium discoideum (Social amoeba).